A 203-amino-acid chain; its full sequence is Twist-related protein 1 (203 aa).

A compositionally biased stretch (low complexity) spans 1–18; sequence MMQDVSSSPVSPADDSLS. The disordered stretch occupies residues 1-106; it reads MMQDVSSSPV…GGGSPQSYEE (106 aa). A compositionally biased stretch (basic residues) spans 34-43; that stretch reads RGGRKRRSSR. Gly residues-rich tracts occupy residues 46 to 65 and 80 to 100; these read AGGGAGPGGAAGGGVGGGDE and GCGGGGGSAGGGGGSSSGGGS. Residues 109–160 form the bHLH domain; that stretch reads TQRVMANVRERQRTQSLNEAFAALRKIIPTLPSDKLSKIQTLKLAARYIDFL. The interval 162–192 is sufficient for transactivation activity; sequence QVLQSDELDSKMASCSYVAHERLSYAFSVWR.

As to quaternary structure, efficient DNA binding requires dimerization with another bHLH protein. Homodimer or heterodimer with E proteins such as TCF3. ID1 binds preferentially to TCF3 but does not interact efficiently with TWIST1 so ID1 levels control the amount of TCF3 available to dimerize with TWIST and thus determine the type of dimer formed.

Its subcellular location is the nucleus. Functionally, acts as a transcriptional regulator. Inhibits myogenesis by sequestrating E proteins, inhibiting trans-activation by MEF2, and inhibiting DNA-binding by MYOD1 through physical interaction. This interaction probably involves the basic domains of both proteins. Also represses expression of pro-inflammatory cytokines such as TNFA and IL1B. Regulates cranial suture patterning and fusion. Activates transcription as a heterodimer with E proteins. Regulates gene expression differentially, depending on dimer composition. Homodimers induce expression of FGFR2 and POSTN while heterodimers repress FGFR2 and POSTN expression and induce THBS1 expression. Heterodimerization is also required for osteoblast differentiation. Represses the activity of the circadian transcriptional activator: NPAS2-BMAL1 heterodimer. The polypeptide is Twist-related protein 1 (TWIST1) (Saguinus oedipus (Cotton-top tamarin)).